Here is a 1003-residue protein sequence, read N- to C-terminus: MPSKFSCRQLREAGQCFESFLVVRGLDMETDRERLRTIYNRDFKISFGTPAPGFSSMLYGMKIANLAYVTKTRVRFFRLDRWADVRFPEKRRMKLGSDISKHHKSLLAKIFYDRAEYLHGKHGVDVEVQGPHEARDGQLLIRLDLNRKEVLTLRLRNGGTQSVTLTHLFPLCRTPQFAFYNEDQELPCPLGPGECYELHVHCKTSFVGYFPATVLWELLGPGESGSEGAGTFYIARFLAAVAHSPLAAQLKPMTPFKRTRITGNPVVTNRIEEGERPDRAKGYDLELSMALGTYYPPPRLRQLLPMLLQGTSIFTAPKEIAEIKAQLETALKWRNYEVKLRLLLHLEELQMEHDIRHYDLESVPMTWDPVDQNPRLLTLEVPGVTESRPSVLRGDHLFALLSSETHQEDPITYKGFVHKVELDRVKLSFSMSLLSRFVDGLTFKVNFTFNRQPLRVQHRALELTGRWLLWPMLFPVAPRDVPLLPSDVKLKLYDRSLESNPEQLQAMRHIVTGTTRPAPYIIFGPPGTGKTVTLVEAIKQVVKHLPKAHILACAPSNSGADLLCQRLRVHLPSSIYRLLAPSRDIRMVPEDIKPCCNWDAKKGEYVFPAKKKLQEYRVLITTLITAGRLVSAQFPIDHFTHIFIDEAGHCMEPESLVAIAGLMEVKETGDPGGQLVLAGDPRQLGPVLRSPLTQKHGLGYSLLERLLTYNSLYKKGPDGYDPQFITKLLRNYRSHPTILDIPNQLYYEGELQACADVVDRERFCRWAGLPRQGFPIIFHGVMGKDEREGNSPSFFNPEEAATVTSYLKLLLAPSSKKGKARLSPRSVGVISPYRKQVEKIRYCITKLDRELRGLDDIKDLKVGSVEEFQGQERSVILISTVRSSQSFVQLDLDFNLGFLKNPKRFNVAVTRAKALLIIVGNPLLLGHDPDWKVFLEFCKENGGYTGCPFPAKLDLQQGQNLLQGLSKLSPSTSGPHSHDYLPQEREGEGGLSLQVEPEWRNEL.

Lys-148 carries the post-translational modification N6-acetyllysine. Residues Thr-160 and Thr-254 each carry the phosphothreonine modification. A Phosphoserine modification is found at Ser-432. Position 524 to 531 (524 to 531) interacts with ATP; the sequence is GPPGTGKT. A DEAG box motif is present at residues 645 to 648; sequence DEAG. An interaction with AGO2 and APOBEC3G region spans residues 921-965; it reads NPLLLGHDPDWKVFLEFCKENGGYTGCPFPAKLDLQQGQNLLQGL. The interval 966 to 1003 is disordered; sequence SKLSPSTSGPHSHDYLPQEREGEGGLSLQVEPEWRNEL. Residues Ser-969 and Ser-977 each carry the phosphoserine modification. Over residues 976-988 the composition is skewed to basic and acidic residues; the sequence is HSHDYLPQEREGE.

It belongs to the DNA2/NAM7 helicase family. SDE3 subfamily. Interacts with DICER1, AGO2, TARBP2, EIF6 and RPL7A (60S ribosome subunit); they form a large RNA-induced silencing complex (RISC). Interacts with APOBEC3G in an RNA-dependent manner. Interacts with TRIM71 (via NHL repeats) in an RNA-dependent manner. Interacts with both protein products of LIRE1, ORF1p and ORF2p. Interacts with TUT4 and, to a lesser extent, TUT7; the interactions are RNA-dependent. Interacts with AGO2, TNRC6B and UPF1; the interactions are direct and RNA-dependent. Interacts with FMR1; this interaction is direct, occurs in an RNA-dependent manner on polysomes and induces association of MOV10 with RNAs. Interacts with SHFL; the interaction increases in presence of RNA. Interacts with DHX34; the interaction is RNA-independent. Interacts with IKBKE. Interacts with RBM46. In terms of assembly, (Microbial infection) Interacts with the human hepatitis delta virus (HDV) antigen HDAg. As to quaternary structure, (Microbial infection) Interacts with HIV-1 protein GAG. In terms of processing, ubiquitinated by the DCX(DCAF12) complex that specifically recognizes the glutamate-leucine (Glu-Leu) degron at the C-terminus, leading to its degradation. (Microbial infection) Cleaved and targeted for degradation by picornavirus proteases.

Its subcellular location is the cytoplasm. The protein resides in the P-body. It localises to the cytoplasmic ribonucleoprotein granule. The protein localises to the stress granule. It is found in the nucleus. The catalysed reaction is ATP + H2O = ADP + phosphate + H(+). In terms of biological role, 5' to 3' RNA helicase that is involved in a number of cellular roles ranging from mRNA metabolism and translation, modulation of viral infectivity, inhibition of retrotransposition, or regulation of synaptic transmission. Plays an important role in innate antiviral immunity by promoting type I interferon production. Mechanistically, specifically uses IKKepsilon/IKBKE as the mediator kinase for IRF3 activation. Blocks HIV-1 virus replication at a post-entry step. Counteracts HIV-1 Vif-mediated degradation of APOBEC3G through its helicase activity by interfering with the ubiquitin-proteasome pathway. Also inhibits hepatitis B virus/HBV replication by interacting with HBV RNA and thereby inhibiting the early step of viral reverse transcription. Contributes to UPF1 mRNA target degradation by translocation along 3' UTRs. Required for microRNA (miRNA)-mediated gene silencing by the RNA-induced silencing complex (RISC). Required for both miRNA-mediated translational repression and miRNA-mediated cleavage of complementary mRNAs by RISC. In cooperation with FMR1, regulates miRNA-mediated translational repression by AGO2. Restricts retrotransposition of long interspersed element-1 (LINE-1) in cooperation with TUT4 and TUT7 counteracting the RNA chaperonne activity of L1RE1. Facilitates LINE-1 uridylation by TUT4 and TUT7. Required for embryonic viability and for normal central nervous system development and function. Plays two critical roles in early brain development: suppresses retroelements in the nucleus by directly inhibiting cDNA synthesis, while regulates cytoskeletal mRNAs to influence neurite outgrowth in the cytosol. May function as a messenger ribonucleoprotein (mRNP) clearance factor. Its function is as follows. (Microbial infection) Required for RNA-directed transcription and replication of the human hepatitis delta virus (HDV). Interacts with small capped HDV RNAs derived from genomic hairpin structures that mark the initiation sites of RNA-dependent HDV RNA transcription. This is Helicase MOV-10 from Homo sapiens (Human).